The sequence spans 74 residues: Protein SspS (74 aa).

The protein belongs to the alpha/beta-type SASP family.

This chain is Protein SspS (sspS), found in Streptococcus pyogenes.